The chain runs to 388 residues: LL-diaminopimelate aminotransferase (388 aa).

Substrate contacts are provided by Tyr-16 and Gly-41. Residues Tyr-70, 104 to 105 (SK), Tyr-129, Asn-179, Tyr-210, and 239 to 241 (SLS) contribute to the pyridoxal 5'-phosphate site. 3 residues coordinate substrate: Lys-105, Tyr-129, and Asn-179. Lys-242 carries the post-translational modification N6-(pyridoxal phosphate)lysine. Residue Arg-250 participates in pyridoxal 5'-phosphate binding. Arg-368 contributes to the substrate binding site.

The protein belongs to the class-I pyridoxal-phosphate-dependent aminotransferase family. LL-diaminopimelate aminotransferase subfamily. As to quaternary structure, homodimer. The cofactor is pyridoxal 5'-phosphate.

The catalysed reaction is (2S,6S)-2,6-diaminopimelate + 2-oxoglutarate = (S)-2,3,4,5-tetrahydrodipicolinate + L-glutamate + H2O + H(+). It participates in amino-acid biosynthesis; L-lysine biosynthesis via DAP pathway; LL-2,6-diaminopimelate from (S)-tetrahydrodipicolinate (aminotransferase route): step 1/1. In terms of biological role, involved in the synthesis of meso-diaminopimelate (m-DAP or DL-DAP), required for both lysine and peptidoglycan biosynthesis. Catalyzes the direct conversion of tetrahydrodipicolinate to LL-diaminopimelate. The protein is LL-diaminopimelate aminotransferase of Nitratidesulfovibrio vulgaris (strain DP4) (Desulfovibrio vulgaris).